The primary structure comprises 377 residues: Putative glutamate--cysteine ligase 2 (377 aa).

Belongs to the glutamate--cysteine ligase type 2 family. YbdK subfamily.

The enzyme catalyses L-cysteine + L-glutamate + ATP = gamma-L-glutamyl-L-cysteine + ADP + phosphate + H(+). In terms of biological role, ATP-dependent carboxylate-amine ligase which exhibits weak glutamate--cysteine ligase activity. This is Putative glutamate--cysteine ligase 2 from Ralstonia pickettii (strain 12J).